The chain runs to 155 residues: Protein LOL2 (155 aa).

Residue methionine 1 is modified to N-acetylmethionine. The tract at residues 1–35 is disordered; it reads MEEIQQQTQKEEQKHREEEEEEEEGPPPGWESAVL. Putative zinc finger stretches follow at residues 60–90 and 98–128; these read QMVC…VNLV and QVNC…VTDI. The interval 130 to 155 is disordered; the sequence is ENNKRPPWSEQQGPLKSLSSLRRAEN. Residues 138 to 149 are compositionally biased toward polar residues; that stretch reads SEQQGPLKSLSS.

It is found in the nucleus. In terms of biological role, putative zinc finger that may be involved in programmed cell death and defense response. The protein is Protein LOL2 (LOL2) of Arabidopsis thaliana (Mouse-ear cress).